A 67-amino-acid polypeptide reads, in one-letter code: Beta-defensin 123 (67 aa).

A signal peptide spans 1–20 (MKLLLLTLTVLLLLSQLTPG). 3 disulfides stabilise this stretch: cysteine 25–cysteine 52, cysteine 32–cysteine 46, and cysteine 36–cysteine 53.

This sequence belongs to the beta-defensin family.

The protein resides in the secreted. In terms of biological role, has antibacterial activity. In Pongo pygmaeus (Bornean orangutan), this protein is Beta-defensin 123 (DEFB123).